A 238-amino-acid chain; its full sequence is Uridylate kinase (238 aa).

An ATP-binding site is contributed by 12–15 (KLSG). Gly-54 provides a ligand contact to UMP. The ATP site is built by Gly-55 and Arg-59. UMP contacts are provided by residues Asp-74 and 135-142 (VGAPYFTT). Residues Thr-162, Tyr-168, and Asp-171 each coordinate ATP.

The protein belongs to the UMP kinase family. As to quaternary structure, homohexamer.

The protein resides in the cytoplasm. It carries out the reaction UMP + ATP = UDP + ADP. The protein operates within pyrimidine metabolism; CTP biosynthesis via de novo pathway; UDP from UMP (UMPK route): step 1/1. Inhibited by UTP. In terms of biological role, catalyzes the reversible phosphorylation of UMP to UDP. This is Uridylate kinase from Erythrobacter litoralis (strain HTCC2594).